A 371-amino-acid polypeptide reads, in one-letter code: 4-hydroxy-3-methylbut-2-en-1-yl diphosphate synthase (flavodoxin) (371 aa).

Residues Cys270, Cys273, Cys305, and Glu312 each coordinate [4Fe-4S] cluster.

It belongs to the IspG family. The cofactor is [4Fe-4S] cluster.

It carries out the reaction (2E)-4-hydroxy-3-methylbut-2-enyl diphosphate + oxidized [flavodoxin] + H2O + 2 H(+) = 2-C-methyl-D-erythritol 2,4-cyclic diphosphate + reduced [flavodoxin]. It functions in the pathway isoprenoid biosynthesis; isopentenyl diphosphate biosynthesis via DXP pathway; isopentenyl diphosphate from 1-deoxy-D-xylulose 5-phosphate: step 5/6. Functionally, converts 2C-methyl-D-erythritol 2,4-cyclodiphosphate (ME-2,4cPP) into 1-hydroxy-2-methyl-2-(E)-butenyl 4-diphosphate. The sequence is that of 4-hydroxy-3-methylbut-2-en-1-yl diphosphate synthase (flavodoxin) from Shewanella halifaxensis (strain HAW-EB4).